The sequence spans 310 residues: Ribosomal RNA small subunit methyltransferase H (310 aa).

S-adenosyl-L-methionine-binding positions include 32 to 34 (AGH), aspartate 52, phenylalanine 79, aspartate 100, and glutamine 107.

The protein belongs to the methyltransferase superfamily. RsmH family.

It localises to the cytoplasm. It carries out the reaction cytidine(1402) in 16S rRNA + S-adenosyl-L-methionine = N(4)-methylcytidine(1402) in 16S rRNA + S-adenosyl-L-homocysteine + H(+). Its function is as follows. Specifically methylates the N4 position of cytidine in position 1402 (C1402) of 16S rRNA. In Bacillus pumilus (strain SAFR-032), this protein is Ribosomal RNA small subunit methyltransferase H.